The primary structure comprises 362 residues: Protein mab-21-like 3 (362 aa).

The protein belongs to the mab-21 family.

The polypeptide is Protein mab-21-like 3 (MAB21L3) (Homo sapiens (Human)).